Here is a 198-residue protein sequence, read N- to C-terminus: Putative glutathione S-transferase alpha-5 (198 aa).

Residues 2-78 form the GST N-terminal domain; sequence TKPTLTYFPV…YISEKHDFRG (77 aa). Residues tyrosine 8, arginine 42, 49–50, and 62–63 contribute to the glutathione site; these read QL and QT. The GST C-terminal domain maps to 80–198; that stretch reads TKEERARAHQ…YLESRPQSNF (119 aa).

Belongs to the GST superfamily. Alpha family.

It catalyses the reaction RX + glutathione = an S-substituted glutathione + a halide anion + H(+). In terms of biological role, conjugation of reduced glutathione to a wide number of exogenous and endogenous hydrophobic electrophiles. This Dictyostelium discoideum (Social amoeba) protein is Putative glutathione S-transferase alpha-5 (gsta5).